We begin with the raw amino-acid sequence, 156 residues long: ATP synthase subunit b (156 aa).

The chain crosses the membrane as a helical span at residues 7–27 (LIGQTVAFIIFVWFCMKFVWP).

It belongs to the ATPase B chain family. F-type ATPases have 2 components, F(1) - the catalytic core - and F(0) - the membrane proton channel. F(1) has five subunits: alpha(3), beta(3), gamma(1), delta(1), epsilon(1). F(0) has three main subunits: a(1), b(2) and c(10-14). The alpha and beta chains form an alternating ring which encloses part of the gamma chain. F(1) is attached to F(0) by a central stalk formed by the gamma and epsilon chains, while a peripheral stalk is formed by the delta and b chains.

Its subcellular location is the cell inner membrane. Functionally, f(1)F(0) ATP synthase produces ATP from ADP in the presence of a proton or sodium gradient. F-type ATPases consist of two structural domains, F(1) containing the extramembraneous catalytic core and F(0) containing the membrane proton channel, linked together by a central stalk and a peripheral stalk. During catalysis, ATP synthesis in the catalytic domain of F(1) is coupled via a rotary mechanism of the central stalk subunits to proton translocation. Component of the F(0) channel, it forms part of the peripheral stalk, linking F(1) to F(0). The chain is ATP synthase subunit b from Shewanella oneidensis (strain ATCC 700550 / JCM 31522 / CIP 106686 / LMG 19005 / NCIMB 14063 / MR-1).